The following is a 134-amino-acid chain: uncharacterized protein (134 aa).

3 helical membrane-spanning segments follow: residues 5-25, 30-50, and 62-82; these read FGIFSFLAVSVSAAGFFFGGF, LILLSLMAIEFISTTLKETII, and LVKKLVTLALISVCHFFDQLL.

This sequence belongs to the bacteriophage holin family. Cp-1 holin subfamily.

It is found in the cell membrane. This is an uncharacterized protein from Bacillus subtilis (strain 168).